The following is a 91-amino-acid chain: MKKLFASLAIAAVVAPVWAATQTVTLSVPGMTCSACPITVKKAISKVEGVSKVNVTFETREAVVTFDDAKTSVQKLTKATEDAGYPSSVKK.

Positions 1–19 (MKKLFASLAIAAVVAPVWA) are cleaved as a signal peptide. An HMA domain is found at 22 to 88 (QTVTLSVPGM…ATEDAGYPSS (67 aa)). Hg(2+)-binding residues include Cys33 and Cys36.

This sequence belongs to the MerP family. Monomer.

It is found in the periplasm. In terms of biological role, involved in mercury resistance. Acts as a mercury scavenger that specifically binds to a mercuric ion in the periplasm and probably passes it to the cytoplasmic mercuric reductase MerA via the mercuric transport protein MerT. The protein is Mercuric transport protein periplasmic component of Serratia marcescens.